The following is a 296-amino-acid chain: Homoserine kinase (296 aa).

92–102 contacts ATP; the sequence is PQSRGLGSSAA.

This sequence belongs to the GHMP kinase family. Homoserine kinase subfamily.

The protein resides in the cytoplasm. The enzyme catalyses L-homoserine + ATP = O-phospho-L-homoserine + ADP + H(+). Its pathway is amino-acid biosynthesis; L-threonine biosynthesis; L-threonine from L-aspartate: step 4/5. Functionally, catalyzes the ATP-dependent phosphorylation of L-homoserine to L-homoserine phosphate. The protein is Homoserine kinase of Cutibacterium acnes (strain DSM 16379 / KPA171202) (Propionibacterium acnes).